The primary structure comprises 304 residues: Release factor glutamine methyltransferase (304 aa).

S-adenosyl-L-methionine-binding residues include D144 and N188. 188 to 191 (NPPY) contacts substrate.

This sequence belongs to the protein N5-glutamine methyltransferase family. PrmC subfamily.

It catalyses the reaction L-glutaminyl-[peptide chain release factor] + S-adenosyl-L-methionine = N(5)-methyl-L-glutaminyl-[peptide chain release factor] + S-adenosyl-L-homocysteine + H(+). Methylates the class 1 translation termination release factors RF1/PrfA and RF2/PrfB on the glutamine residue of the universally conserved GGQ motif. The protein is Release factor glutamine methyltransferase of Mycobacterium tuberculosis (strain ATCC 25618 / H37Rv).